The following is a 518-amino-acid chain: Glutamate--cysteine ligase (518 aa).

It belongs to the glutamate--cysteine ligase type 1 family. Type 1 subfamily.

The catalysed reaction is L-cysteine + L-glutamate + ATP = gamma-L-glutamyl-L-cysteine + ADP + phosphate + H(+). It participates in sulfur metabolism; glutathione biosynthesis; glutathione from L-cysteine and L-glutamate: step 1/2. This is Glutamate--cysteine ligase from Salmonella paratyphi C (strain RKS4594).